The following is a 283-amino-acid chain: Bifunctional protein FolD (283 aa).

NADP(+) contacts are provided by residues 164–166 (GSS), isoleucine 189, and isoleucine 230.

This sequence belongs to the tetrahydrofolate dehydrogenase/cyclohydrolase family. Homodimer.

It catalyses the reaction (6R)-5,10-methylene-5,6,7,8-tetrahydrofolate + NADP(+) = (6R)-5,10-methenyltetrahydrofolate + NADPH. The enzyme catalyses (6R)-5,10-methenyltetrahydrofolate + H2O = (6R)-10-formyltetrahydrofolate + H(+). It functions in the pathway one-carbon metabolism; tetrahydrofolate interconversion. Catalyzes the oxidation of 5,10-methylenetetrahydrofolate to 5,10-methenyltetrahydrofolate and then the hydrolysis of 5,10-methenyltetrahydrofolate to 10-formyltetrahydrofolate. The sequence is that of Bifunctional protein FolD from Fusobacterium nucleatum subsp. nucleatum (strain ATCC 25586 / DSM 15643 / BCRC 10681 / CIP 101130 / JCM 8532 / KCTC 2640 / LMG 13131 / VPI 4355).